Consider the following 311-residue polypeptide: Formimidoylglutamase (311 aa).

Positions 127, 152, 154, 156, 236, and 238 each coordinate Mn(2+).

This sequence belongs to the arginase family. Requires Mn(2+) as cofactor.

It carries out the reaction N-formimidoyl-L-glutamate + H2O = formamide + L-glutamate. It functions in the pathway amino-acid degradation; L-histidine degradation into L-glutamate; L-glutamate from N-formimidoyl-L-glutamate (hydrolase route): step 1/1. Its function is as follows. Catalyzes the conversion of N-formimidoyl-L-glutamate to L-glutamate and formamide. This Macrococcus caseolyticus (strain JCSC5402) (Macrococcoides caseolyticum) protein is Formimidoylglutamase.